The primary structure comprises 380 residues: Cytochrome b (380 aa).

The next 4 membrane-spanning stretches (helical) occupy residues 33–53 (FGSL…FLAM), 77–98 (WLLR…YLHI), 113–133 (WNIG…GYVL), and 178–198 (FFTF…LHLL). Positions 83 and 97 each coordinate heme b. Residues H182 and H196 each coordinate heme b. A ubiquinone is bound at residue H201. A run of 4 helical transmembrane segments spans residues 226–246 (YKDL…ALLN), 288–308 (LGGV…PTLH), 320–340 (SSQT…WIGG), and 347–367 (FIII…FFIP).

The protein belongs to the cytochrome b family. As to quaternary structure, the cytochrome bc1 complex contains 3 respiratory subunits (MT-CYB, CYC1 and UQCRFS1), 2 core proteins (UQCRC1 and UQCRC2) and probably 6 low-molecular weight proteins. The cofactor is heme b.

Its subcellular location is the mitochondrion inner membrane. Functionally, component of the ubiquinol-cytochrome c reductase complex (complex III or cytochrome b-c1 complex) that is part of the mitochondrial respiratory chain. The b-c1 complex mediates electron transfer from ubiquinol to cytochrome c. Contributes to the generation of a proton gradient across the mitochondrial membrane that is then used for ATP synthesis. This is Cytochrome b (mt-cyb) from Lepisosteus oculatus (Spotted gar).